The primary structure comprises 1000 residues: Isoleucine--tRNA ligase, mitochondrial (1000 aa).

The N-terminal 27 residues, 1–27 (MLGAWRAAPRLRLRARFGVASVWARSA), are a transit peptide targeting the mitochondrion. The short motif at 102-112 (PYANGDPHVGH) is the 'HIGH' region element. Residues lysine 649 and lysine 652 each coordinate ATP. The 'KMSKS' region motif lies at 649-653 (KMSKS).

This sequence belongs to the class-I aminoacyl-tRNA synthetase family.

The protein resides in the mitochondrion matrix. It catalyses the reaction tRNA(Ile) + L-isoleucine + ATP = L-isoleucyl-tRNA(Ile) + AMP + diphosphate. Functionally, aminoacyl-tRNA synthetase that catalyzes the specific attachment of isoleucine to its cognate tRNA (tRNA(Ile)). The protein is Isoleucine--tRNA ligase, mitochondrial (IARS2) of Gallus gallus (Chicken).